The sequence spans 185 residues: HTH-type transcriptional regulator Hpr (185 aa).

One can recognise an HTH marR-type domain in the interval 13–157; it reads AMIFSQRIAQ…LIAILRNIYG (145 aa). The segment at residues 63-86 is a DNA-binding region (H-T-H motif); that stretch reads ISEIAKFGVMHVSTAFNFSKKLEE.

Homodimer.

Negative regulator of protease production and sporulation. This Bacillus cytotoxicus (strain DSM 22905 / CIP 110041 / 391-98 / NVH 391-98) protein is HTH-type transcriptional regulator Hpr.